We begin with the raw amino-acid sequence, 912 residues long: Protein translocase subunit SecA (912 aa).

ATP contacts are provided by residues Gln87, 105 to 109, and Asp509; that span reads GEGKT. Positions 847–859 are enriched in basic and acidic residues; that stretch reads RERAVSQPVHEDA. Positions 847–912 are disordered; that stretch reads RERAVSQPVH…KYKHCHGKLN (66 aa). Residues 867–878 show a composition bias toward acidic residues; sequence AESEEASGESAD. A compositionally biased stretch (basic and acidic residues) spans 881-892; that stretch reads QPVRRDGPKVGR. Zn(2+) is bound by residues Cys896, Cys898, Cys907, and His908. A compositionally biased stretch (basic residues) spans 902-912; sequence KKYKHCHGKLN.

This sequence belongs to the SecA family. In terms of assembly, monomer and homodimer. Part of the essential Sec protein translocation apparatus which comprises SecA, SecYEG and auxiliary proteins SecDF-YajC and YidC. Requires Zn(2+) as cofactor.

Its subcellular location is the cell inner membrane. It localises to the cytoplasm. The catalysed reaction is ATP + H2O + cellular proteinSide 1 = ADP + phosphate + cellular proteinSide 2.. Part of the Sec protein translocase complex. Interacts with the SecYEG preprotein conducting channel. Has a central role in coupling the hydrolysis of ATP to the transfer of proteins into and across the cell membrane, serving both as a receptor for the preprotein-SecB complex and as an ATP-driven molecular motor driving the stepwise translocation of polypeptide chains across the membrane. In Chromohalobacter salexigens (strain ATCC BAA-138 / DSM 3043 / CIP 106854 / NCIMB 13768 / 1H11), this protein is Protein translocase subunit SecA.